The primary structure comprises 365 residues: uncharacterized protein (365 aa).

2 disordered regions span residues 218–262 (QRPS…AEAA) and 315–342 (PRLP…RTPC). 2 stretches are compositionally biased toward basic and acidic residues: residues 239-257 (PDNR…KDPE) and 331-341 (MEFRNLSDRTP).

This is an uncharacterized protein from Mus musculus (Mouse).